The chain runs to 635 residues: Extracellular metalloproteinase 9 (635 aa).

The N-terminal stretch at 1 to 19 (MHGLLLAAGLLTLPLRALA) is a signal peptide. Residues 20–246 (HPGHQSTSIL…IHGVTDYVAD (227 aa)) constitute a propeptide that is removed on maturation. N-linked (GlcNAc...) asparagine glycosylation is present at asparagine 274. Residues 279 to 307 (TWHSDGNTRYPTTRGNNGIAQDNPSGGTG) form a disordered region. Asparagine 413 is a glycosylation site (N-linked (GlcNAc...) asparagine). Histidine 430 lines the Zn(2+) pocket. Residue glutamate 431 is part of the active site. Histidine 434 is a Zn(2+) binding site. Asparagine 475 carries an N-linked (GlcNAc...) asparagine glycan.

Belongs to the peptidase M36 family. Requires Zn(2+) as cofactor.

The protein resides in the secreted. Functionally, secreted metalloproteinase that allows assimilation of proteinaceous substrates. The protein is Extracellular metalloproteinase 9 (MEP9) of Uncinocarpus reesii (strain UAMH 1704).